The sequence spans 42 residues: Potassium channel toxin gamma-KTx 1.6 (42 aa).

Intrachain disulfides connect C5–C23, C11–C34, C20–C39, and C24–C41.

Belongs to the ergtoxin family. Gamma-KTx 1 subfamily. As to expression, expressed by the venom gland.

The protein resides in the secreted. Functionally, blocks Kv11/ERG potassium channels. This Centruroides exilicauda (Bark scorpion) protein is Potassium channel toxin gamma-KTx 1.6.